The sequence spans 261 residues: Gap junction beta-6 protein (261 aa).

The Cytoplasmic portion of the chain corresponds to 1–22 (MDWGTLHTVIGGVNKHSTSIGK). The chain crosses the membrane as a helical span at residues 23–45 (VWITVIFIFRVMILVVAAQEVWG). Residues 46-75 (DEQEDFVCNTLQPGCKNVCYDHFFPVSHIR) are Extracellular-facing. A helical transmembrane segment spans residues 76–98 (LWALQLIFVSTPALLVAMHVAYY). The Cytoplasmic segment spans residues 99-131 (RHETARKFIRGEKRNEFKDLEDIKRQKVRIEGS). Residues 132 to 154 (LWWTYTSSIFFRIIFEAAFMYVF) form a helical membrane-spanning segment. At 155–192 (YFLYNGYHLPWVLKCGIDPCPNLVDCFISRPTEKTVFT) the chain is on the extracellular side. The helical transmembrane segment at 193–215 (VFMISASVICMLLNVAELCYLLL) threads the bilayer. Residues 216-261 (KLCFRRSKRTQAQRNHPNHALKESKQNEMNELISDSGQNAITSFPS) lie on the Cytoplasmic side of the membrane.

It belongs to the connexin family. Beta-type (group I) subfamily. In terms of assembly, a connexon is composed of a hexamer of connexins. Interacts with CNST. Highly expressed in adult brain and skin. Less in uterus, lung and eye. Very low in testis and sciatic nerve. No expression before birth.

The protein resides in the cell membrane. It is found in the cell junction. The protein localises to the gap junction. In terms of biological role, one gap junction consists of a cluster of closely packed pairs of transmembrane channels, the connexons, through which materials of low MW diffuse from one cell to a neighboring cell. This chain is Gap junction beta-6 protein (Gjb6), found in Mus musculus (Mouse).